Consider the following 348-residue polypeptide: Delta(6)-protoilludene synthase 18 (348 aa).

4 residues coordinate Mg(2+): D87, N223, S227, and E231. The DDXXD motif motif lies at 87 to 91 (DEYTD). Residues 223–231 (NDLVSYNRE) carry the NSE/DTE motif motif. (2E,6E)-farnesyl diphosphate is bound by residues R311 and Y312.

The protein belongs to the terpene synthase family. Mg(2+) serves as cofactor.

The enzyme catalyses (2E,6E)-farnesyl diphosphate = Delta(6)-protoilludene + diphosphate. Terpene cyclase that catalyzes the cyclization of farnesyl diphosphate (FPP) to delta(6)-protoilludene. In Postia placenta (strain ATCC 44394 / Madison 698-R) (Brown rot fungus), this protein is Delta(6)-protoilludene synthase 18.